The primary structure comprises 457 residues: tRNA modification GTPase MnmE (457 aa).

Residues arginine 25, glutamate 87, and arginine 126 each coordinate (6S)-5-formyl-5,6,7,8-tetrahydrofolate. A TrmE-type G domain is found at 223–377; that stretch reads GISTAIIGRP…IEERINNLFF (155 aa). Asparagine 233 provides a ligand contact to K(+). Residues 233 to 238, 252 to 258, and 277 to 280 each bind GTP; these read NVGKSS, TDIAGTT, and DTAG. Position 237 (serine 237) interacts with Mg(2+). Residues threonine 252, isoleucine 254, and threonine 257 each coordinate K(+). Threonine 258 lines the Mg(2+) pocket. Lysine 457 provides a ligand contact to (6S)-5-formyl-5,6,7,8-tetrahydrofolate.

Belongs to the TRAFAC class TrmE-Era-EngA-EngB-Septin-like GTPase superfamily. TrmE GTPase family. Homodimer. Heterotetramer of two MnmE and two MnmG subunits. The cofactor is K(+).

The protein resides in the cytoplasm. Its function is as follows. Exhibits a very high intrinsic GTPase hydrolysis rate. Involved in the addition of a carboxymethylaminomethyl (cmnm) group at the wobble position (U34) of certain tRNAs, forming tRNA-cmnm(5)s(2)U34. The sequence is that of tRNA modification GTPase MnmE from Streptococcus pneumoniae serotype 4 (strain ATCC BAA-334 / TIGR4).